A 523-amino-acid polypeptide reads, in one-letter code: ADP-ribosylation factor GTPase-activating protein 3 (523 aa).

In terms of domain architecture, Arf-GAP spans 10–126 (LAIFKRLRSV…IKTLATQATR (117 aa)). The C4-type zinc finger occupies 25-48 (CFDCGAKNPSWASISYGVFLCIDC). A disordered region spans residues 162 to 206 (GAMQASAQPESASSTPWGLETTPEKHEGGPGQGPSVEGLNTPGKA). Positions 164-177 (MQASAQPESASSTP) are enriched in polar residues. Phosphoserine is present on residues Ser231 and Ser241. The interval 248–269 (QAQAVDKRKEQEDLARGAPKEE) is disordered. A phosphoserine mark is found at Ser270, Ser274, and Ser331. Positions 308 to 424 (GFGSCRSGIS…YEPIGSTDEA (117 aa)) are disordered. The span at 314–332 (SGISHSVTSDMQTIEQESP) shows a compositional bias: polar residues. Residues 348–361 (SYFSSSSKWSEQSS) show a composition bias toward low complexity. Ser377 is modified (phosphoserine). Residues 385 to 396 (YWKKDSSRDPEP) show a composition bias toward basic and acidic residues. Phosphoserine occurs at positions 435, 458, 460, 462, 464, and 465.

It is found in the cytoplasm. It localises to the golgi apparatus membrane. With respect to regulation, GAP activity stimulated by phosphatidylinositol 4,5-bisphosphate (PIP2). GTPase-activating protein (GAP) for ADP ribosylation factor 1 (ARF1). Hydrolysis of ARF1-bound GTP may lead to dissociation of coatomer from Golgi-derived membranes to allow fusion with target membranes. This chain is ADP-ribosylation factor GTPase-activating protein 3 (Arfgap3), found in Mus musculus (Mouse).